The primary structure comprises 222 residues: Deoxyribose-phosphate aldolase (222 aa).

Catalysis depends on Asp-90, which acts as the Proton donor/acceptor. The Schiff-base intermediate with acetaldehyde role is filled by Lys-152. The active-site Proton donor/acceptor is Lys-181.

The protein belongs to the DeoC/FbaB aldolase family. DeoC type 1 subfamily.

It is found in the cytoplasm. The enzyme catalyses 2-deoxy-D-ribose 5-phosphate = D-glyceraldehyde 3-phosphate + acetaldehyde. Its pathway is carbohydrate degradation; 2-deoxy-D-ribose 1-phosphate degradation; D-glyceraldehyde 3-phosphate and acetaldehyde from 2-deoxy-alpha-D-ribose 1-phosphate: step 2/2. Functionally, catalyzes a reversible aldol reaction between acetaldehyde and D-glyceraldehyde 3-phosphate to generate 2-deoxy-D-ribose 5-phosphate. This is Deoxyribose-phosphate aldolase from Pectobacterium carotovorum subsp. carotovorum (strain PC1).